An 831-amino-acid polypeptide reads, in one-letter code: Probable DNA-directed RNA polymerase (831 aa).

Active-site residues include D490, K560, and D738.

It belongs to the phage and mitochondrial RNA polymerase family.

It localises to the mitochondrion. The enzyme catalyses RNA(n) + a ribonucleoside 5'-triphosphate = RNA(n+1) + diphosphate. Functionally, DNA-dependent RNA polymerase catalyzes the transcription of DNA into RNA using the four ribonucleoside triphosphates as substrates. The polypeptide is Probable DNA-directed RNA polymerase (Gelasinospora sp. (strain G114)).